A 505-amino-acid chain; its full sequence is Deoxyguanosinetriphosphate triphosphohydrolase (505 aa).

The HD domain occupies Arg66–Cys273.

The protein belongs to the dGTPase family. Type 1 subfamily. In terms of assembly, homotetramer. Mg(2+) is required as a cofactor.

The enzyme catalyses dGTP + H2O = 2'-deoxyguanosine + triphosphate + H(+). In terms of biological role, dGTPase preferentially hydrolyzes dGTP over the other canonical NTPs. The protein is Deoxyguanosinetriphosphate triphosphohydrolase of Escherichia coli O81 (strain ED1a).